The chain runs to 251 residues: Ditrans,polycis-undecaprenyl-diphosphate synthase ((2E,6E)-farnesyl-diphosphate specific) (251 aa).

Asp-20 is a catalytic residue. Asp-20 is a Mg(2+) binding site. Residues Gly-21–Arg-24, Trp-25, Arg-33, His-37, and Ser-65–Glu-67 each bind substrate. Catalysis depends on Asn-68, which acts as the Proton acceptor. Substrate-binding positions include Trp-69, Arg-71, Arg-188, and Arg-194–Ser-196. Residue Glu-207 participates in Mg(2+) binding.

The protein belongs to the UPP synthase family. As to quaternary structure, homodimer. Requires Mg(2+) as cofactor.

It catalyses the reaction 8 isopentenyl diphosphate + (2E,6E)-farnesyl diphosphate = di-trans,octa-cis-undecaprenyl diphosphate + 8 diphosphate. Functionally, catalyzes the sequential condensation of isopentenyl diphosphate (IPP) with (2E,6E)-farnesyl diphosphate (E,E-FPP) to yield (2Z,6Z,10Z,14Z,18Z,22Z,26Z,30Z,34E,38E)-undecaprenyl diphosphate (di-trans,octa-cis-UPP). UPP is the precursor of glycosyl carrier lipid in the biosynthesis of bacterial cell wall polysaccharide components such as peptidoglycan and lipopolysaccharide. The polypeptide is Ditrans,polycis-undecaprenyl-diphosphate synthase ((2E,6E)-farnesyl-diphosphate specific) (Vibrio vulnificus (strain CMCP6)).